The sequence spans 626 residues: Serine/threonine-protein kinase PknB (626 aa).

The Cytoplasmic portion of the chain corresponds to 1–332 (MTTPSHLSDR…DRSIGSVGRW (332 aa)). Positions 11–274 (YELGEILGFG…TAAEMRADLV (264 aa)) constitute a Protein kinase domain. ATP is bound by residues 17–25 (LGFGGMSEV), Lys40, and 93–95 (EYV). The active-site Proton acceptor is the Asp138. Residues 140 to 143 (KPAN) and Asp156 contribute to the ATP site. Mg(2+)-binding residues include Asn143 and Asp156. Phosphoserine; by autocatalysis occurs at positions 166 and 169. Phosphothreonine; by autocatalysis is present on residues Thr171, Thr173, and Thr294. Ser295 carries the post-translational modification Phosphoserine; by autocatalysis. Residues 299-323 (SAAGNLSGPRTDPLPRQDLDDTDRD) are disordered. Phosphothreonine; by autocatalysis is present on Thr309. Residues 311-323 (PLPRQDLDDTDRD) are compositionally biased toward basic and acidic residues. Residues 333 to 353 (VAVVAVLAVLTVVVTIAINTF) form a helical membrane-spanning segment. Residues 354–626 (GGITRDVQVP…DGIITLRFGQ (273 aa)) are Extracellular-facing. 4 consecutive PASTA domains span residues 356-422 (ITRD…NVST), 423-490 (GPEQ…IVGS), 491-557 (GPAT…QVSK), and 558-626 (GNQF…RFGQ).

This sequence belongs to the protein kinase superfamily. Ser/Thr protein kinase family. In terms of assembly, homodimer. Autophosphorylated. Dephosphorylated by PstP.

The protein resides in the cell membrane. The catalysed reaction is L-seryl-[protein] + ATP = O-phospho-L-seryl-[protein] + ADP + H(+). It carries out the reaction L-threonyl-[protein] + ATP = O-phospho-L-threonyl-[protein] + ADP + H(+). In terms of biological role, protein kinase that regulates many aspects of mycobacterial physiology. Is a key component of a signal transduction pathway that regulates cell growth, cell shape and cell division via phosphorylation of target proteins. This Mycobacterium bovis (strain ATCC BAA-935 / AF2122/97) protein is Serine/threonine-protein kinase PknB (pknB).